The sequence spans 395 residues: Ribosomal RNA large subunit methyltransferase G (395 aa).

Belongs to the methyltransferase superfamily. RlmG family.

The protein resides in the cytoplasm. The catalysed reaction is guanosine(1835) in 23S rRNA + S-adenosyl-L-methionine = N(2)-methylguanosine(1835) in 23S rRNA + S-adenosyl-L-homocysteine + H(+). In terms of biological role, specifically methylates the guanine in position 1835 (m2G1835) of 23S rRNA. This chain is Ribosomal RNA large subunit methyltransferase G, found in Yersinia pestis (strain Pestoides F).